Reading from the N-terminus, the 726-residue chain is Dipeptidyl-peptidase 5 (726 aa).

Residues 1–19 (MAAAKWLIASLAFASSGLA) form the signal peptide. 2 N-linked (GlcNAc...) asparagine glycosylation sites follow: N96 and N252. Positions 269–291 (AEPINKRNGPRTPQGIEGASSSP) are disordered. Catalysis depends on S558, which acts as the Charge relay system. N-linked (GlcNAc...) asparagine glycosylation is present at N605. Residues D641 and H673 each act as charge relay system in the active site. N-linked (GlcNAc...) asparagine glycosylation is present at N699.

This sequence belongs to the peptidase S9C family.

The protein resides in the secreted. Its function is as follows. Extracellular dipeptidyl-peptidase which removes N-terminal dipeptides sequentially from polypeptides having unsubstituted N-termini. Contributes to pathogenicity. The protein is Dipeptidyl-peptidase 5 (DPP5) of Trichophyton tonsurans (Scalp ringworm fungus).